We begin with the raw amino-acid sequence, 945 residues long: Kinesin-like protein KIN-UA (945 aa).

A disordered region spans residues Met-1–Asp-54. The span at Ala-22–Pro-31 shows a compositional bias: low complexity. The region spanning Arg-57–Ile-399 is the Kinesin motor domain. ATP is bound at residue Gly-142 to Thr-149. A D-BOX motif is present at residues Arg-369 to Gly-377. Residues Tyr-415 to Asp-644 are a coiled coil. ARM repeat units lie at residues Arg-683–Ala-722, Asp-724–Met-764, Gly-766–Gly-806, and Glu-808–Lys-847.

It belongs to the TRAFAC class myosin-kinesin ATPase superfamily. Kinesin family. Ungrouped subfamily.

The protein localises to the cytoplasm. It is found in the cytoskeleton. In Oryza sativa subsp. japonica (Rice), this protein is Kinesin-like protein KIN-UA.